The sequence spans 256 residues: Follistatin-related protein 3 (256 aa).

An N-terminal signal peptide occupies residues 1–23 (MRPGALWPLLWGALVWAVGSVGA). Positions 34-105 (GVCWLQQGKE…SCDGVECGPG (72 aa)) constitute a TB domain. Cystine bridges form between cysteine 36–cysteine 59, cysteine 46–cysteine 90, cysteine 60–cysteine 93, cysteine 97–cysteine 108, cysteine 102–cysteine 117, cysteine 119–cysteine 151, cysteine 123–cysteine 144, and cysteine 133–cysteine 165. Residue asparagine 71 is glycosylated (N-linked (GlcNAc...) asparagine). Residues 97–117 (CDGVECGPGKACRMLGGRPHC) form the Follistatin-like 1 domain. Kazal-like domains are found at residues 111 to 167 (LGGR…RCQK) and 187 to 243 (SAHC…ICTG). Residues 168–191 (SCAQVVCPRPQSCLVDQTGSAHCV) form the Follistatin-like 2 domain. Cystine bridges form between cysteine 193/cysteine 227, cysteine 198/cysteine 220, and cysteine 209/cysteine 241. N-linked (GlcNAc...) asparagine glycosylation is present at asparagine 213.

In terms of assembly, interacts with INHBA and INHBB. Interacts with FN1. Interacts with ADAM12. Interacts with MLLT10; the interaction enhances MLLT10 in vitro transcriptional activity and self-association. Interacts with MSTN.

It localises to the secreted. The protein localises to the nucleus. The secreted form is a binding and antagonizing protein for members of the TGF-beta family, such as activin, BMP2 and MSTN. Inhibits activin A-, activin B-, BMP2- and MSDT-induced cellular signaling; more effective on activin A than on activin B. Involved in bone formation; inhibits osteoclast differentiation. Involved in hematopoiesis; involved in differentiation of hemopoietic progenitor cells, increases hematopoietic cell adhesion to fibronectin and seems to contribute to the adhesion of hematopoietic precursor cells to the bone marrow stroma. The nuclear form is probably involved in transcriptional regulation via interaction with MLLT10. In Rattus norvegicus (Rat), this protein is Follistatin-related protein 3 (Fstl3).